Here is a 744-residue protein sequence, read N- to C-terminus: Tripartite motif-containing protein 2 (744 aa).

At serine 10 the chain carries Phosphoserine. The RING-type zinc finger occupies 23–64 (CSICLERYKNPKVLPCLHTFCERCLQNYIPAHSLTLSCPVCR). The B box-type zinc-finger motif lies at 113–154 (GKPLSCPNHDGNVMEFYCQSCETAMCRECTEGEHAEHPTVPL). Zn(2+)-binding residues include cysteine 118, histidine 121, cysteine 141, and histidine 146. Residues 320–421 (TTNAVASETV…IRGSPFKLKV (102 aa)) form a Filamin repeat. Threonine 371 bears the Phosphothreonine mark. Serine 375, serine 424, and serine 428 each carry phosphoserine. The tract at residues 432–462 (EGVKRRVKSPGSGHVKQKAVKRPASMYSTGK) is disordered. 6 NHL repeats span residues 473 to 516 (IFRV…FSND), 520 to 563 (KSRF…FSSD), 564 to 605 (GKFK…FQPN), 609 to 652 (VTRF…FNQE), 656 to 699 (MLKF…FDGS), and 700 to 743 (GSFL…YRYL).

The protein belongs to the TRIM/RBCC family. Forms homooligomers. Interacts with TRIM3; this interaction reduces TRIM2 activity. Interacts with myosin V; myosin V may not be a substrate for ubiquitination. Interacts with NEFL. Interacts with phosphorylated BCL2L11. Interacts with SIRPA. RING-type zinc finger-dependent and UBE2D1-dependent autoubiquitination.

The protein resides in the cytoplasm. It catalyses the reaction S-ubiquitinyl-[E2 ubiquitin-conjugating enzyme]-L-cysteine + [acceptor protein]-L-lysine = [E2 ubiquitin-conjugating enzyme]-L-cysteine + N(6)-ubiquitinyl-[acceptor protein]-L-lysine.. It participates in protein modification; protein ubiquitination. In terms of biological role, UBE2D1-dependent E3 ubiquitin-protein ligase that mediates the ubiquitination of NEFL and of phosphorylated BCL2L11. Plays a neuroprotective function. May play a role in neuronal rapid ischemic tolerance. Plays a role in antiviral immunity and limits New World arenavirus infection independently of its ubiquitin ligase activity. This Homo sapiens (Human) protein is Tripartite motif-containing protein 2 (TRIM2).